Consider the following 55-residue polypeptide: Large ribosomal subunit protein bL33 (55 aa).

It belongs to the bacterial ribosomal protein bL33 family.

The chain is Large ribosomal subunit protein bL33 from Paenarthrobacter aurescens (strain TC1).